Here is a 322-residue protein sequence, read N- to C-terminus: F-box protein At2g16300 (322 aa).

In terms of domain architecture, F-box spans 2–50; that stretch reads ADWSLLPNDLLELIVGHLETSFEIVLFRSVCSSWRSVVPPQDQSRCLSI.

This Arabidopsis thaliana (Mouse-ear cress) protein is F-box protein At2g16300.